Here is a 297-residue protein sequence, read N- to C-terminus: Signal-transducing adaptor protein 1 (297 aa).

In terms of domain architecture, PH spans proline 25–glutamate 121. Tyrosine 170 is modified (phosphotyrosine). Residues glutamate 179 to alanine 273 enclose the SH2 domain. The disordered stretch occupies residues histidine 271–alanine 297.

Interacts with URI1; the interaction is phosphorylation-dependent occurs in a growth-dependent manner. Interacts with KIT and CSF1R. Post-translationally, phosphorylated on tyrosine by TEC. Phosphorylated on tyrosine by KIT. Expression restricted to the bone marrow.

The protein resides in the nucleus. It localises to the cytoplasm. It is found in the mitochondrion. May function as an adapter molecule downstream of KIT in the proliferation or differentiation of hematopoietic stem cells. The chain is Signal-transducing adaptor protein 1 (Stap1) from Mus musculus (Mouse).